The primary structure comprises 548 residues: Tyrosine-protein phosphatase non-receptor type 61F (548 aa).

Over 1–525 (MSEQKTSGSG…KQLAAKKRRS (525 aa)) the chain is Cytoplasmic. A Tyrosine-protein phosphatase domain is found at 33 to 296 (FYKEICETCD…DFSYQAIIEG (264 aa)). A disordered region spans residues 46–65 (KEKQFSTSESERHTNRGLNR). Ser-83 is modified (phosphoserine). Tyr-86 bears the Phosphotyrosine mark. Residues Asp-203, 237 to 243 (CSAGIGR), and Gln-281 each bind substrate. Residue Cys-237 is the Phosphocysteine intermediate of the active site. Short sequence motifs (PXXP motif (SH3-binding)) lie at residues 327–330 (PPLP), 339–342 (PLAP), and 394–397 (PPLP). Residues 386-517 (EVADSRPLPP…RKQRENEDKQ (132 aa)) are disordered. Over residues 404–428 (SDSDEDYLLDDDDEDDTDEDEEYET) the composition is skewed to acidic residues. 2 short sequence motifs (PXXP motif (SH3-binding)) span residues 459–462 (PAVP) and 480–483 (PASP). Residues 502–517 (KVNDMKRKQRENEDKQ) are compositionally biased toward basic and acidic residues. Residues 526–545 (LLTYIAAGVVVGVICAYAYT) form a helical membrane-spanning segment. Residues 546 to 548 (KLG) are Extracellular-facing.

Belongs to the protein-tyrosine phosphatase family. Non-receptor class 1 subfamily. In terms of assembly, interacts (via C-terminus) with dock/dreadlocks; this interaction is independent of insulin stimulation and is required for dephosphorylation of the insulin-like receptor InR.

The protein localises to the cytoplasm. It is found in the membrane. Its subcellular location is the endomembrane system. The protein resides in the nucleus. It catalyses the reaction O-phospho-L-tyrosyl-[protein] + H2O = L-tyrosyl-[protein] + phosphate. Its function is as follows. Non-receptor protein tyrosine phosphatase. Required for maintaining dock/dreadlocks in its non-phosphorylated state. Negative regulator of InR/insulin-like receptor signaling through dephosphorylation of tyrosines when recruited by dock/dreadlocks. This is Tyrosine-protein phosphatase non-receptor type 61F from Drosophila melanogaster (Fruit fly).